The primary structure comprises 100 residues: MIPLTHGLILAAILFVLGLTGLVIRRNLLFMLIGLEIMINASALAFVVAGSYWGQTDGQVMYILAISLAAAEASIGLALLLQLHRRRQNLNIDSVSEMRG.

A run of 3 helical transmembrane segments spans residues 4-24 (LTHG…GLVI), 28-48 (LLFM…AFVV), and 60-80 (VMYI…LALL).

It belongs to the complex I subunit 4L family. NDH-1 is composed of 13 different subunits. Subunits NuoA, H, J, K, L, M, N constitute the membrane sector of the complex.

Its subcellular location is the cell inner membrane. It carries out the reaction a quinone + NADH + 5 H(+)(in) = a quinol + NAD(+) + 4 H(+)(out). NDH-1 shuttles electrons from NADH, via FMN and iron-sulfur (Fe-S) centers, to quinones in the respiratory chain. The immediate electron acceptor for the enzyme in this species is believed to be ubiquinone. Couples the redox reaction to proton translocation (for every two electrons transferred, four hydrogen ions are translocated across the cytoplasmic membrane), and thus conserves the redox energy in a proton gradient. The chain is NADH-quinone oxidoreductase subunit K from Salmonella agona (strain SL483).